The chain runs to 227 residues: PKHD-type hydroxylase BamMC406_5004 (227 aa).

One can recognise a Fe2OG dioxygenase domain in the interval 80-179 (QVYPPLFNRY…RVASFFWVQS (100 aa)). Fe cation is bound by residues histidine 98, aspartate 100, and histidine 160. Residue arginine 170 coordinates 2-oxoglutarate.

Fe(2+) serves as cofactor. L-ascorbate is required as a cofactor.

This is PKHD-type hydroxylase BamMC406_5004 from Burkholderia ambifaria (strain MC40-6).